We begin with the raw amino-acid sequence, 526 residues long: O-phosphoserine--tRNA(Cys) ligase (526 aa).

Residues 189 to 191, 234 to 236, 276 to 277, and Asn319 each bind substrate; these read HMT, SAS, and YY.

The protein belongs to the class-II aminoacyl-tRNA synthetase family. O-phosphoseryl-tRNA(Cys) synthetase subfamily. As to quaternary structure, homotetramer. Interacts with SepCysS.

It catalyses the reaction tRNA(Cys) + O-phospho-L-serine + ATP = O-phospho-L-seryl-tRNA(Cys) + AMP + diphosphate. Catalyzes the attachment of O-phosphoserine (Sep) to tRNA(Cys). The polypeptide is O-phosphoserine--tRNA(Cys) ligase (Methanocorpusculum labreanum (strain ATCC 43576 / DSM 4855 / Z)).